Here is a 311-residue protein sequence, read N- to C-terminus: CID domain-containing protein 1 (311 aa).

The CID domain maps to Met-1 to Lys-134. Residues Met-224–Ser-256 adopt a coiled-coil conformation.

This is CID domain-containing protein 1 (cids-1) from Caenorhabditis briggsae.